Consider the following 527-residue polypeptide: Cyclin-L1 (527 aa).

Residues Met1–Thr37 form a disordered region. 2 cyclin-like regions span residues Glu89–Lys191 and Lys204–Arg288. Thr326 is modified (phosphothreonine). Residues Pro327–Arg527 are disordered. 2 positions are modified to phosphoserine: Ser336 and Ser339. Residues Lys340 and Lys348 each participate in a glycyl lysine isopeptide (Lys-Gly) (interchain with G-Cter in SUMO2) cross-link. The span at Ser343 to Ser353 shows a compositional bias: basic and acidic residues. Phosphoserine occurs at positions 353 and 356. Basic and acidic residues predominate over residues Val362–Gln371. A Glycyl lysine isopeptide (Lys-Gly) (interchain with G-Cter in SUMO2) cross-link involves residue Lys363. Position 375 is a phosphoserine (Ser375). Basic residues-rich tracts occupy residues Asp383 to Arg419, Arg439 to His453, Ser461 to Ser477, and Lys487 to Arg499. Positions Arg391 to Ser433 are RS. Ser446 is modified (phosphoserine). Positions Arg500–Ser509 are enriched in basic and acidic residues. A compositionally biased stretch (basic residues) spans His510–Arg527.

Belongs to the cyclin family. Cyclin L subfamily. In terms of assembly, interacts with POLR2A via its hyperphosphorylated C-terminal domain (CTD). Interacts with CDK11A, CDK11B, CDK12 and CDK13. May form a ternary complex with CDK11B and casein kinase II (CKII). Interacts with pre-mRNA-splicing factors, including at least SRSF1, SRSF2 AND SRSF7/SLU7. In terms of tissue distribution, ubiquitous with higher level in liver; expressed in striatal neurons.

It localises to the nucleus speckle. The protein resides in the nucleus. Its subcellular location is the nucleoplasm. Functionally, involved in pre-mRNA splicing. Functions in association with cyclin-dependent kinases (CDKs). May play a role in the regulation of RNA polymerase II (pol II). Inhibited by the CDK-specific inhibitor CDKN1A/p21. This is Cyclin-L1 (Ccnl1) from Rattus norvegicus (Rat).